Here is a 242-residue protein sequence, read N- to C-terminus: Small ribosomal subunit protein uS2 (242 aa).

The protein belongs to the universal ribosomal protein uS2 family.

The protein is Small ribosomal subunit protein uS2 of Shewanella pealeana (strain ATCC 700345 / ANG-SQ1).